The following is a 246-amino-acid chain: Probable transcriptional regulatory protein NT01CX_1819 (246 aa).

The protein belongs to the TACO1 family.

It is found in the cytoplasm. The sequence is that of Probable transcriptional regulatory protein NT01CX_1819 from Clostridium novyi (strain NT).